A 151-amino-acid chain; its full sequence is Deoxyuridine 5'-triphosphate nucleotidohydrolase (151 aa).

Residues 70–72 (RSG), N83, 87–89 (LID), and M97 each bind substrate.

This sequence belongs to the dUTPase family. Requires Mg(2+) as cofactor.

It catalyses the reaction dUTP + H2O = dUMP + diphosphate + H(+). Its pathway is pyrimidine metabolism; dUMP biosynthesis; dUMP from dCTP (dUTP route): step 2/2. Functionally, this enzyme is involved in nucleotide metabolism: it produces dUMP, the immediate precursor of thymidine nucleotides and it decreases the intracellular concentration of dUTP so that uracil cannot be incorporated into DNA. In Pseudomonas putida (strain W619), this protein is Deoxyuridine 5'-triphosphate nucleotidohydrolase.